The following is a 196-amino-acid chain: dTTP/UTP pyrophosphatase (196 aa).

D72 acts as the Proton acceptor in catalysis.

Belongs to the Maf family. YhdE subfamily. It depends on a divalent metal cation as a cofactor.

It localises to the cytoplasm. It carries out the reaction dTTP + H2O = dTMP + diphosphate + H(+). It catalyses the reaction UTP + H2O = UMP + diphosphate + H(+). Functionally, nucleoside triphosphate pyrophosphatase that hydrolyzes dTTP and UTP. May have a dual role in cell division arrest and in preventing the incorporation of modified nucleotides into cellular nucleic acids. This Chlamydia caviae (strain ATCC VR-813 / DSM 19441 / 03DC25 / GPIC) (Chlamydophila caviae) protein is dTTP/UTP pyrophosphatase.